Consider the following 123-residue polypeptide: Probable U6 snRNA-associated Sm-like protein LSm4 (123 aa).

The region spanning 3-76 is the Sm domain; sequence LPLSLLKTAQ…IKYLRIPETV (74 aa). Residues 85 to 97 show a composition bias toward basic and acidic residues; the sequence is NEVRRQQQREQSR. Positions 85–123 are disordered; that stretch reads NEVRRQQQREQSRGRGGGRGGRGGHRGGGGNRGGRGGAR. Residues 98–123 show a composition bias toward gly residues; it reads GRGGGRGGRGGHRGGGGNRGGRGGAR.

The protein belongs to the snRNP Sm proteins family. In terms of assembly, component of the precatalytic spliceosome (spliceosome B complex). Component of the U4/U6-U5 tri-snRNP complex, a building block of the precatalytic spliceosome (spliceosome B complex). LSM2, LSM3, LSM4, LSM5, LSM6, LSM7 and LSM8 form a heptameric, ring-shaped subcomplex (the LSM2-8 complex) that is part of the U4/U6-U5 tri-snRNP complex and the precatalytic spliceosome.

It is found in the nucleus. Functionally, plays a role in pre-mRNA splicing as component of the U4/U6-U5 tri-snRNP complex that is involved in spliceosome assembly, and as component of the precatalytic spliceosome (spliceosome B complex). The heptameric LSM2-8 complex binds specifically to the 3'-terminal U-tract of U6 snRNA. This is Probable U6 snRNA-associated Sm-like protein LSm4 (lsm-4) from Caenorhabditis elegans.